The sequence spans 177 residues: MSRVAKNPVQIPAGVEVKFDGRLVNIKGGKGALSLSVHPSVEVKQEDGALTFGPKEGSNQARALAGTTRALINNMVLGVTQGFERKLELIGVGYRAQAQGKAINLTLGFSHPVVFEIPEGITAETPTQTEIVIRGIDKQKVGQVAAEIRSIRPPEPYKGKGVRYSGEQVRVKEAKKK.

This sequence belongs to the universal ribosomal protein uL6 family. As to quaternary structure, part of the 50S ribosomal subunit.

Its function is as follows. This protein binds to the 23S rRNA, and is important in its secondary structure. It is located near the subunit interface in the base of the L7/L12 stalk, and near the tRNA binding site of the peptidyltransferase center. The polypeptide is Large ribosomal subunit protein uL6 (Hahella chejuensis (strain KCTC 2396)).